We begin with the raw amino-acid sequence, 618 residues long: NAD(P)H-quinone oxidoreductase subunit 5, organellar chromatophore 2 (618 aa).

A run of 17 helical transmembrane segments spans residues 16–36 (LIPI…TGWI), 43–63 (TPAY…SLAL), 99–119 (LAAL…ALGY), 129–149 (FFAL…SDSL), 152–172 (SYFL…FWYA), 190–210 (GDVM…GMEF), 220–240 (NTLT…GPIG), 267–287 (SVVV…LHHS), 291–311 (IAVL…VSIA), 318–335 (TLSY…IAIA), 348–368 (AHAI…AVSN), 390–410 (LIAG…CFGL), 419–438 (APWF…LNLT), 461–481 (WQMA…PWMM), 495–515 (AITG…GAIV), 553–573 (IVSG…NGFV), and 597–617 (SYIL…SWLV).

Belongs to the complex I subunit 5 family. In terms of assembly, NDH is composed of at least 16 different subunits, 5 of which are encoded in the nucleus.

It is found in the plastid. The protein resides in the organellar chromatophore thylakoid membrane. The catalysed reaction is a plastoquinone + NADH + (n+1) H(+)(in) = a plastoquinol + NAD(+) + n H(+)(out). It catalyses the reaction a plastoquinone + NADPH + (n+1) H(+)(in) = a plastoquinol + NADP(+) + n H(+)(out). In terms of biological role, NDH shuttles electrons from NAD(P)H:plastoquinone, via FMN and iron-sulfur (Fe-S) centers, to quinones in the photosynthetic chain and possibly in a chloroplast respiratory chain. The immediate electron acceptor for the enzyme in this species is believed to be plastoquinone. Couples the redox reaction to proton translocation, and thus conserves the redox energy in a proton gradient. The protein is NAD(P)H-quinone oxidoreductase subunit 5, organellar chromatophore 2 (ndhF2) of Paulinella chromatophora.